Here is a 338-residue protein sequence, read N- to C-terminus: Ketol-acid reductoisomerase (NADP(+)) (338 aa).

The KARI N-terminal Rossmann domain maps to 1 to 181 (MKVYYDKDCD…GGGRTGIIET (181 aa)). Residues 24–27 (YGSQ), Arg-47, Ser-50, Ser-52, and 82–85 (DEFQ) each bind NADP(+). His-107 is an active-site residue. Gly-133 is an NADP(+) binding site. The KARI C-terminal knotted domain occupies 182 to 327 (TFKDETETDL…EKLRTMMPWI (146 aa)). Mg(2+) contacts are provided by Asp-190, Glu-194, Glu-226, and Glu-230. Ser-251 is a binding site for substrate.

Belongs to the ketol-acid reductoisomerase family. Requires Mg(2+) as cofactor.

It catalyses the reaction (2R)-2,3-dihydroxy-3-methylbutanoate + NADP(+) = (2S)-2-acetolactate + NADPH + H(+). The catalysed reaction is (2R,3R)-2,3-dihydroxy-3-methylpentanoate + NADP(+) = (S)-2-ethyl-2-hydroxy-3-oxobutanoate + NADPH + H(+). It functions in the pathway amino-acid biosynthesis; L-isoleucine biosynthesis; L-isoleucine from 2-oxobutanoate: step 2/4. The protein operates within amino-acid biosynthesis; L-valine biosynthesis; L-valine from pyruvate: step 2/4. Functionally, involved in the biosynthesis of branched-chain amino acids (BCAA). Catalyzes an alkyl-migration followed by a ketol-acid reduction of (S)-2-acetolactate (S2AL) to yield (R)-2,3-dihydroxy-isovalerate. In the isomerase reaction, S2AL is rearranged via a Mg-dependent methyl migration to produce 3-hydroxy-3-methyl-2-ketobutyrate (HMKB). In the reductase reaction, this 2-ketoacid undergoes a metal-dependent reduction by NADPH to yield (R)-2,3-dihydroxy-isovalerate. The protein is Ketol-acid reductoisomerase (NADP(+)) of Azotobacter vinelandii (strain DJ / ATCC BAA-1303).